Here is a 600-residue protein sequence, read N- to C-terminus: Long-chain-fatty-acid--CoA ligase FadD15 (600 aa).

Belongs to the ATP-dependent AMP-binding enzyme family.

It catalyses the reaction a long-chain fatty acid + ATP + CoA = a long-chain fatty acyl-CoA + AMP + diphosphate. Its pathway is lipid metabolism; fatty acid biosynthesis. Functionally, catalyzes the activation of long-chain fatty acids as acyl-coenzyme A (acyl-CoA), which are then transferred to the multifunctional polyketide synthase (PKS) type III for further chain extension. This is Long-chain-fatty-acid--CoA ligase FadD15 (fadD15) from Mycobacterium bovis (strain ATCC BAA-935 / AF2122/97).